The primary structure comprises 83 residues: Parvalbumin beta 3 (83 aa).

EF-hand domains follow at residues 13–48 and 52–83; these read KSND…FSAG and LTAG…LVKA. Positions 26, 28, 30, 32, 34, 37, 65, 67, 69, 71, and 76 each coordinate Ca(2+).

It belongs to the parvalbumin family.

In terms of biological role, in muscle, parvalbumin is thought to be involved in relaxation after contraction. It binds two calcium ions. This is Parvalbumin beta 3 from Macruronus novaezelandiae (Blue grenadier).